The chain runs to 126 residues: Large ribosomal subunit protein bL12 (126 aa).

It belongs to the bacterial ribosomal protein bL12 family. Homodimer. Part of the ribosomal stalk of the 50S ribosomal subunit. Forms a multimeric L10(L12)X complex, where L10 forms an elongated spine to which 2 to 4 L12 dimers bind in a sequential fashion. Binds GTP-bound translation factors.

Its function is as follows. Forms part of the ribosomal stalk which helps the ribosome interact with GTP-bound translation factors. Is thus essential for accurate translation. The polypeptide is Large ribosomal subunit protein bL12 (Acidovorax sp. (strain JS42)).